The following is a 294-amino-acid chain: Proteasome subunit beta (294 aa).

The propeptide at 1 to 65 (MTADRPALRT…MESGDLAPHG (65 aa)) is removed in mature form; by autocatalysis. The active-site Nucleophile is the threonine 66.

Belongs to the peptidase T1B family. The 20S proteasome core is composed of 14 alpha and 14 beta subunits that assemble into four stacked heptameric rings, resulting in a barrel-shaped structure. The two inner rings, each composed of seven catalytic beta subunits, are sandwiched by two outer rings, each composed of seven alpha subunits. The catalytic chamber with the active sites is on the inside of the barrel. Has a gated structure, the ends of the cylinder being occluded by the N-termini of the alpha-subunits. Is capped by the proteasome-associated ATPase, ARC.

The protein resides in the cytoplasm. The enzyme catalyses Cleavage of peptide bonds with very broad specificity.. The protein operates within protein degradation; proteasomal Pup-dependent pathway. With respect to regulation, the formation of the proteasomal ATPase ARC-20S proteasome complex, likely via the docking of the C-termini of ARC into the intersubunit pockets in the alpha-rings, may trigger opening of the gate for substrate entry. Interconversion between the open-gate and close-gate conformations leads to a dynamic regulation of the 20S proteasome proteolysis activity. Component of the proteasome core, a large protease complex with broad specificity involved in protein degradation. This chain is Proteasome subunit beta, found in Rhodococcus opacus (strain B4).